The following is a 522-amino-acid chain: Maturase K (522 aa).

It belongs to the intron maturase 2 family. MatK subfamily.

The protein localises to the plastid. It is found in the chloroplast. Its function is as follows. Usually encoded in the trnK tRNA gene intron. Probably assists in splicing its own and other chloroplast group II introns. The chain is Maturase K from Iris sanguinea (Japanese iris).